A 369-amino-acid chain; its full sequence is Sesquiterpene cyclase hepA (369 aa).

Residues D100, N248, S252, and D256 each coordinate Mg(2+). Residues 100–104 (DDEID) carry the DDXXD motif motif. The (N,D)D(L,I,V)X(S,T)XXXE motif signature appears at 255–262 (NDLLSLRK).

Belongs to the terpene synthase family. Mg(2+) serves as cofactor.

In terms of biological role, sesquiterpene cyclase; part of the gene cluster that mediates the biosynthesis of heptelidic acid (HA), a sesquiterpene lactone that acts as an inhibitor of glyceraldehyde-3-phosphatedehydrogenase (GAPDH) and a growth inhibitor of the salt-tolerant lactic acid bacteria in soy sauce brewing. In Aspergillus oryzae (strain ATCC 42149 / RIB 40) (Yellow koji mold), this protein is Sesquiterpene cyclase hepA.